The primary structure comprises 539 residues: Inositol 1,4,5-triphosphate receptor associated 2 (539 aa).

Disordered stretches follow at residues 1–21, 69–98, and 147–171; these read MLCVKGPPEQEPEDGALDVTR, YLTQPSSEQTSSSESTVTSSESGSDILHMA, and AGEELRTTENGGKGSAPGETEISMP. Over 1–479 the chain is Cytoplasmic; the sequence is MLCVKGPPEQ…LQASFRRANR (479 aa). The span at 74–92 shows a compositional bias: low complexity; that stretch reads SSEQTSSSESTVTSSESGS. Threonine 78 is subject to Phosphothreonine. Positions 298 to 326 form a coiled coil; the sequence is MIQHVENLKRMYAKEHAELEDLKQALLQN. Residues 334 to 353 form a disordered region; it reads PDEDDCQIKKRSSSLNSKPS. Phosphoserine is present on residues serine 347, serine 354, and serine 408. The interval 418–449 is disordered; sequence ERSDVKARDAPEPQGEEAVERTRKPSLSERRS. Residues 435–449 are compositionally biased toward basic and acidic residues; that stretch reads AVERTRKPSLSERRS. Residues 480 to 500 form a helical; Anchor for type IV membrane protein membrane-spanning segment; that stretch reads ALWLTGLIIILIAALMSFLTG. Residues 501–539 lie on the Lumenal side of the membrane; it reads QLFQTAVEAAPTQEGDSWLSLEHILWPFTRLGHDGPPPV.

The protein belongs to the IRAG2 family. Interacts (via coiled-coil domain) with ITPR3. Interacts with SUN1 and SUN2. Interacts with microtubules. Interacts with HCN4; regulates HCN4 channel activity. Post-translationally, the removal of the C-terminal lumenal domain occurs by proteolytic processing. As to expression, spleen and thymus. Expressed at high levels in pre B-cells, mature B-cells and pre T-cells. Expressed at low levels in mature T-cells and plasma B-cells. Expressed in circumvallate (CV), foliate (FL) and fungiform (FF) taste papillae cells of the tongue epithelium.

It is found in the cytoplasm. It localises to the endoplasmic reticulum membrane. The protein localises to the nucleus envelope. Its subcellular location is the cytoskeleton. The protein resides in the microtubule organizing center. It is found in the centrosome. It localises to the spindle pole. The protein localises to the chromosome. Its function is as follows. Plays a role in the delivery of peptides to major histocompatibility complex (MHC) class I molecules; this occurs in a transporter associated with antigen processing (TAP)-independent manner. May play a role in taste signal transduction via ITPR3. May play a role during fertilization in pronucleus congression and fusion. Plays a role in maintaining nuclear shape, maybe as a component of the LINC complex and through interaction with microtubules. Plays a role in the regulation of cellular excitability by regulating the hyperpolarization-activated cyclic nucleotide-gated HCN4 channel activity. The protein is Inositol 1,4,5-triphosphate receptor associated 2 (Irag2) of Mus musculus (Mouse).